The chain runs to 926 residues: Up-regulator of cell proliferation (926 aa).

Position 3 is a phosphoserine (S3). One can recognise a VLIG-type G domain in the interval 689-924 (RSRLVVLSAL…NIQQLIELLR (236 aa)).

Belongs to the TRAFAC class dynamin-like GTPase superfamily. Very large inducible GTPase (VLIG) family.

The protein localises to the cytoplasm. The protein resides in the nucleus. Its function is as follows. May be involved in cell cycle progression through the regulation of cyclin D1 expression. The chain is Up-regulator of cell proliferation (Urgcp) from Mus musculus (Mouse).